We begin with the raw amino-acid sequence, 847 residues long: B-cell receptor CD22 (847 aa).

Positions 1 to 19 (MHLLGPWLLLLVLEYLAFS) are cleaved as a signal peptide. Residues 20–138 (DSSKWAFEHP…MERIHLNVSE (119 aa)) form the Ig-like V-type domain. Residues 20 to 687 (DSSKWAFEHP…YYSPETIGRR (668 aa)) lie on the Extracellular side of the membrane. 3 N-linked (GlcNAc...) asparagine glycosylation sites follow: Asn-67, Asn-101, and Asn-112. Residue Arg-120 coordinates N-acetylneuraminate. N-linked (GlcNAc...) asparagine glycosylation is found at Asn-135, Asn-164, and Asn-231. Ig-like C2-type domains lie at 143–235 (PHIQ…DTVQ), 242–326 (PKLE…VFLQ), 331–416 (PEPS…LDVQ), 419–500 (PKKV…VALN), 505–582 (PRDV…QTAS), and 593–676 (PRRL…STLT). An intrachain disulfide couples Cys-161 to Cys-219. 2 cysteine pairs are disulfide-bonded: Cys-265-Cys-309 and Cys-353-Cys-396. Residues Asn-363, Asn-428, Asn-445, Asn-448, and Asn-479 are each glycosylated (N-linked (GlcNAc...) asparagine). Disulfide bonds link Cys-442/Cys-484 and Cys-529/Cys-571. N-linked (GlcNAc...) asparagine glycosylation is found at Asn-574 and Asn-634. A disulfide bridge links Cys-616 with Cys-659. A helical membrane pass occupies residues 688 to 708 (VAVGFGSCLAILILAICGLKL). The Cytoplasmic portion of the chain corresponds to 709–847 (QRRWKRTQSQ…ENVDYVILKH (139 aa)). A phosphoserine mark is found at Ser-725, Ser-726, and Ser-729. 2 short sequence motifs (ITIM motif) span residues 760–765 (ISYTTL) and 794–799 (VTYSVL). Tyr-762 bears the Phosphotyrosine mark. A phosphotyrosine mark is found at Tyr-807, Tyr-822, and Tyr-842. 2 consecutive short sequence motifs (ITIM motif) follow at residues 820-825 (IHYSEL) and 840-845 (VDYVIL).

This sequence belongs to the immunoglobulin superfamily. SIGLEC (sialic acid binding Ig-like lectin) family. Predominantly monomer of isoform CD22-beta. Also found as heterodimer of isoform CD22-beta and a shorter isoform. Interacts with PTPN6/SHP-1, LYN, SYK, PIK3R1/PIK3R2 and PLCG1 upon phosphorylation. Interacts with GRB2, INPP5D and SHC1 upon phosphorylation. May form a complex with INPP5D/SHIP, GRB2 and SHC1. In terms of processing, phosphorylation of Tyr-762, Tyr-807 and Tyr-822 are involved in binding to SYK, GRB2 and SYK, respectively. Phosphorylation of Tyr-842 is involved in binding to SYK, PLCG2 and PIK3R1/PIK3R2. Post-translationally, phosphorylated on tyrosine residues by LYN.

It localises to the cell membrane. Its function is as follows. Most highly expressed siglec (sialic acid-binding immunoglobulin-like lectin) on B-cells that plays a role in various aspects of B-cell biology including differentiation, antigen presentation, and trafficking to bone marrow. Binds to alpha 2,6-linked sialic acid residues of surface molecules such as CD22 itself, CD45 and IgM in a cis configuration. Can also bind to ligands on other cells as an adhesion molecule in a trans configuration. Acts as an inhibitory coreceptor on the surface of B-cells and inhibits B-cell receptor induced signaling, characterized by inhibition of the calcium mobilization and cellular activation. Mechanistically, the immunoreceptor tyrosine-based inhibitory motif domain is phosphorylated by the Src kinase LYN, which in turn leads to the recruitment of the protein tyrosine phosphatase 1/PTPN6, leading to the negative regulation of BCR signaling. If this negative signaling from is of sufficient strength, apoptosis of the B-cell can be induced. In Pan troglodytes (Chimpanzee), this protein is B-cell receptor CD22.